A 185-amino-acid polypeptide reads, in one-letter code: Capsid protein (185 aa).

The disordered stretch occupies residues 136-185 (NAPILSTLPETTVVRRRDRGRSPRRRTPSPRRRRSQSPRRRRSQSRESQC). Residues 149-178 (VRRRDRGRSPRRRTPSPRRRRSQSPRRRRS) are compositionally biased toward basic residues. Residues S157, S164, and S172 each carry the phosphoserine; by host modification. A 1; half-length repeat occupies 157–163 (SPRRRTP). Residues 157–179 (SPRRRTPSPRRRRSQSPRRRRSQ) form a 3 X 8 AA repeats of S-P-R-R-R-[PR]-S-Q region. A Bipartite nuclear localization signal motif is present at residues 160 to 177 (RRTPSPRRRRSQSPRRRR). 2 consecutive repeat copies span residues 164–171 (SPRRRRSQ) and 172–179 (SPRRRRSQ). An RNA binding region spans residues 179 to 185 (QSRESQC).

It belongs to the orthohepadnavirus core antigen family. As to quaternary structure, homodimerizes, then multimerizes. Interacts with cytosol exposed regions of viral L glycoprotein present in the reticulum-to-Golgi compartment. Interacts with human FLNB. Phosphorylated form interacts with host importin alpha; this interaction depends on the exposure of the NLS, which itself depends upon genome maturation and/or phosphorylation of the capsid protein. Interacts with host NUP153. Post-translationally, phosphorylated by host SRPK1, SRPK2, and maybe protein kinase C or GAPDH. Phosphorylation is critical for pregenomic RNA packaging. Protein kinase C phosphorylation is stimulated by HBx protein and may play a role in transport of the viral genome to the nucleus at the late step during the viral replication cycle.

The protein resides in the virion. It is found in the host cytoplasm. In terms of biological role, self assembles to form an icosahedral capsid. Most capsids appear to be large particles with an icosahedral symmetry of T=4 and consist of 240 copies of capsid protein, though a fraction forms smaller T=3 particles consisting of 180 capsid proteins. Entering capsids are transported along microtubules to the nucleus. Phosphorylation of the capsid is thought to induce exposure of nuclear localization signal in the C-terminal portion of the capsid protein that allows binding to the nuclear pore complex via the importin (karyopherin-) alpha and beta. Capsids are imported in intact form through the nuclear pore into the nuclear basket, where it probably binds NUP153. Only capsids that contain the mature viral genome can release the viral DNA and capsid protein into the nucleoplasm. Immature capsids get stuck in the basket. Capsids encapsulate the pre-genomic RNA and the P protein. Pre-genomic RNA is reverse-transcribed into DNA while the capsid is still in the cytoplasm. The capsid can then either be directed to the nucleus, providing more genomes for transcription, or bud through the endoplasmic reticulum to provide new virions. In Homo sapiens (Human), this protein is Capsid protein.